The chain runs to 416 residues: Serine hydroxymethyltransferase (416 aa).

(6S)-5,6,7,8-tetrahydrofolate contacts are provided by residues leucine 118 and 122–124; that span reads GHL. N6-(pyridoxal phosphate)lysine is present on lysine 226. (6S)-5,6,7,8-tetrahydrofolate is bound by residues glutamate 242 and 350 to 352; that span reads SPF.

Belongs to the SHMT family. As to quaternary structure, homodimer. Requires pyridoxal 5'-phosphate as cofactor.

The protein resides in the cytoplasm. It catalyses the reaction (6R)-5,10-methylene-5,6,7,8-tetrahydrofolate + glycine + H2O = (6S)-5,6,7,8-tetrahydrofolate + L-serine. It functions in the pathway one-carbon metabolism; tetrahydrofolate interconversion. Its pathway is amino-acid biosynthesis; glycine biosynthesis; glycine from L-serine: step 1/1. Catalyzes the reversible interconversion of serine and glycine with tetrahydrofolate (THF) serving as the one-carbon carrier. This reaction serves as the major source of one-carbon groups required for the biosynthesis of purines, thymidylate, methionine, and other important biomolecules. Also exhibits THF-independent aldolase activity toward beta-hydroxyamino acids, producing glycine and aldehydes, via a retro-aldol mechanism. This chain is Serine hydroxymethyltransferase, found in Helicobacter acinonychis (strain Sheeba).